The primary structure comprises 585 residues: Arginine--tRNA ligase (585 aa).

Positions 131–141 match the 'HIGH' region motif; it reads ANPTGPMHVGH.

It belongs to the class-I aminoacyl-tRNA synthetase family. In terms of assembly, monomer.

The protein localises to the cytoplasm. It catalyses the reaction tRNA(Arg) + L-arginine + ATP = L-arginyl-tRNA(Arg) + AMP + diphosphate. The chain is Arginine--tRNA ligase from Bartonella bacilliformis (strain ATCC 35685 / KC583 / Herrer 020/F12,63).